The primary structure comprises 274 residues: NADPH-dependent 7-cyano-7-deazaguanine reductase (274 aa).

Residue 80–82 (VES) coordinates substrate. 82–83 (SK) provides a ligand contact to NADPH. The Thioimide intermediate role is filled by C181. D188 (proton donor) is an active-site residue. 220–221 (HE) is a substrate binding site. 249–250 (RG) lines the NADPH pocket.

The protein belongs to the GTP cyclohydrolase I family. QueF type 2 subfamily. As to quaternary structure, homodimer.

Its subcellular location is the cytoplasm. It carries out the reaction 7-aminomethyl-7-carbaguanine + 2 NADP(+) = 7-cyano-7-deazaguanine + 2 NADPH + 3 H(+). It functions in the pathway tRNA modification; tRNA-queuosine biosynthesis. Catalyzes the NADPH-dependent reduction of 7-cyano-7-deazaguanine (preQ0) to 7-aminomethyl-7-deazaguanine (preQ1). This is NADPH-dependent 7-cyano-7-deazaguanine reductase from Paraburkholderia phymatum (strain DSM 17167 / CIP 108236 / LMG 21445 / STM815) (Burkholderia phymatum).